The primary structure comprises 630 residues: Sodium-dependent serotonin transporter (630 aa).

At 1–87 (METTALNSQK…ERETWGKKVD (87 aa)) the chain is on the cytoplasmic side. Residue Y47 is modified to Phosphotyrosine. Residues 88-112 (FLLSVIGYAVDLGNIWRFPYVCYQN) form a helical membrane-spanning segment. Na(+)-binding residues include G94, A96, V97, D98, and N101. A serotonin-binding site is contributed by D98. Residues 113–115 (GGG) lie on the Extracellular side of the membrane. A helical membrane pass occupies residues 116–135 (AFLLPYIIMAIFGGIPLFYM). At 136–160 (ELALGQYHRNGCISIWRKICPIFKG) the chain is on the cytoplasmic side. A Phosphotyrosine modification is found at Y142. The chain crosses the membrane as a helical span at residues 161–186 (IGYTICIIAFYIASYYNTIIAWALYY). Over 187-252 (LISSFTDRLP…KGLQDVGGVS (66 aa)) the chain is Extracellular. A disulfide bridge links C200 with C209. N208 and N217 each carry an N-linked (GlcNAc...) asparagine glycan. The helical transmembrane segment at 253 to 271 (WQLTLCIMLIFTIIYFSIW) threads the bilayer. Residues 272-277 (KGVKTS) lie on the Cytoplasmic side of the membrane. T276 is modified (phosphothreonine). A helical membrane pass occupies residues 278–297 (GKVVWVTATFPYIVLSVLLV). Topologically, residues 298 to 324 (RGATLPGAWKGVLFYLKPNWQKLLETG) are extracellular. Residues 325 to 347 (VWIDAAAQIFFSLGPGFGVLLAF) form a helical membrane-spanning segment. S336 is a binding site for Na(+). Residues 348 to 360 (ASYNKFNNNCYQD) are Cytoplasmic-facing. The helical transmembrane segment at 361–380 (ALVTSAVNCMTSFVSGFVIF) threads the bilayer. N368 lines the Na(+) pocket. At 381 to 421 (TVLGYMAEMRSEDVSEVAKDAGPSLLFITYAEAIANMPAST) the chain is on the extracellular side. Residues 422-443 (FFAIIFFLMLITLGLDSTFAGL) traverse the membrane as a helical segment. The Na(+) site is built by L434, D437, and S438. T439 is a binding site for serotonin. At 444 to 463 (EGVITAVLDEFPHIWAKHRE) the chain is on the cytoplasmic side. Residues 464-483 (WFVLAVVITCFFGSLTTLTF) traverse the membrane as a helical segment. Residues 484–494 (GGAYVVKLLEE) are Extracellular-facing. Residues E494 and Y495 each coordinate serotonin. A helical membrane pass occupies residues 495 to 516 (YATGPAVLTVVFIEAIAVSWFY). Residues 517–538 (GVTQFCSDVKEMLGFSPGWFWR) are Cytoplasmic-facing. Residues 539–558 (ICWVAVSPVFLLFIICSFLM) traverse the membrane as a helical segment. Serotonin is bound by residues F556 and S559. At 559 to 574 (SPPQLRLFQYSYPHWS) the chain is on the extracellular side. A helical transmembrane segment spans residues 575 to 595 (VILGYCIGTSSVICIPTYITY). Residues 596 to 630 (RLVTTPGTLKERIIKSITPETPTEIPCGDICLNAV) are Cytoplasmic-facing. Positions 616–624 (TPTEIPCGD) are interaction with RAB4A.

Belongs to the sodium:neurotransmitter symporter (SNF) (TC 2.A.22) family. SLC6A4 subfamily. As to quaternary structure, monomer or homooligomer. Interacts (via C-terminus) with SCAMP2; the interaction is direct and retains transporter molecules intracellularly. Interacts with filamentous actin and STX1A. Interacts (via the N-terminus) with STX1A (via the H3 domain); this interaction regulates SLC4A6 channel conductance. Interacts with SEC23A, SEC24C and PATJ. Interacts with NOS1; the interaction may diminish the cell surface localization of SERT in the brain and, correspondingly, reduce serotonin reuptake. Interacts with TGFB1I1. Interacts with ITGAV:ITGB3. Interacts (via C-terminus) with ITGB3; this interaction regulates SLC6A4 trafficking. Phosphorylation at Thr-276 increases 5-HT uptake and is required for cGMP-mediated SERT regulation. Expressed in the intestinal crypt epithelial cells (at protein level).

It localises to the cell membrane. The protein localises to the endomembrane system. Its subcellular location is the endosome membrane. The protein resides in the synapse. It is found in the cell junction. It localises to the focal adhesion. The protein localises to the cell projection. Its subcellular location is the neuron projection. The enzyme catalyses serotonin(out) + K(+)(in) + Na(+)(out) + H(+)(in) = serotonin(in) + K(+)(out) + Na(+)(in) + H(+)(out). In terms of biological role, serotonin transporter that cotransports serotonin with one Na(+) ion in exchange for one K(+) ion and possibly one proton in an overall electroneutral transport cycle. Transports serotonin across the plasma membrane from the extracellular compartment to the cytosol thus limiting serotonin intercellular signaling. Essential for serotonin homeostasis in the central nervous system. In the developing somatosensory cortex, acts in glutamatergic neurons to control serotonin uptake and its trophic functions accounting for proper spatial organization of cortical neurons and elaboration of sensory circuits. In the mature cortex, acts primarily in brainstem raphe neurons to mediate serotonin uptake from the synaptic cleft back into the pre-synaptic terminal thus terminating serotonin signaling at the synapse. Modulates mucosal serotonin levels in the gastrointestinal tract through uptake and clearance of serotonin in enterocytes. Required for enteric neurogenesis and gastrointestinal reflexes. Regulates blood serotonin levels by ensuring rapid high affinity uptake of serotonin from plasma to platelets, where it is further stored in dense granules via vesicular monoamine transporters and then released upon stimulation. Mechanistically, the transport cycle starts with an outward-open conformation having Na1(+) and Cl(-) sites occupied. The binding of a second extracellular Na2(+) ion and serotonin substrate leads to structural changes to outward-occluded to inward-occluded to inward-open, where the Na2(+) ion and serotonin are released into the cytosol. Binding of intracellular K(+) ion induces conformational transitions to inward-occluded to outward-open and completes the cycle by releasing K(+) possibly together with a proton bound to Asp-98 into the extracellular compartment. Na1(+) and Cl(-) ions remain bound throughout the transport cycle. Additionally, displays serotonin-induced channel-like conductance for monovalent cations, mainly Na(+) ions. The channel activity is uncoupled from the transport cycle and may contribute to the membrane resting potential or excitability. This Cavia porcellus (Guinea pig) protein is Sodium-dependent serotonin transporter (SLC6A4).